The chain runs to 277 residues: Large ribosomal subunit protein uL2 (277 aa).

A disordered region spans residues 218–277; it reads PTVRGSVMNPNDHPHGGGEGKAPVGRKAPSTPWGKPALGLKTRNKKAKSDKLIVRRRNEK. Basic and acidic residues predominate over residues 264-277; the sequence is AKSDKLIVRRRNEK.

This sequence belongs to the universal ribosomal protein uL2 family. As to quaternary structure, part of the 50S ribosomal subunit. Forms a bridge to the 30S subunit in the 70S ribosome.

Its function is as follows. One of the primary rRNA binding proteins. Required for association of the 30S and 50S subunits to form the 70S ribosome, for tRNA binding and peptide bond formation. It has been suggested to have peptidyltransferase activity; this is somewhat controversial. Makes several contacts with the 16S rRNA in the 70S ribosome. In Streptococcus pyogenes serotype M4 (strain MGAS10750), this protein is Large ribosomal subunit protein uL2.